An 89-amino-acid polypeptide reads, in one-letter code: Rho beta-crystallin (89 aa).

His31 is a binding site for substrate.

The protein belongs to the aldo/keto reductase family. Monomer.

The chain is Rho beta-crystallin from Lepidodactylus lugubris (Mourning gecko).